The primary structure comprises 227 residues: Orotidine 5'-phosphate decarboxylase (227 aa).

Substrate is bound by residues D8, K30, 57–66 (DLKFHDIPNT), T116, R177, Q186, G206, and R207. Catalysis depends on K59, which acts as the Proton donor.

It belongs to the OMP decarboxylase family. Type 1 subfamily. Homodimer.

It carries out the reaction orotidine 5'-phosphate + H(+) = UMP + CO2. Its pathway is pyrimidine metabolism; UMP biosynthesis via de novo pathway; UMP from orotate: step 2/2. Its function is as follows. Catalyzes the decarboxylation of orotidine 5'-monophosphate (OMP) to uridine 5'-monophosphate (UMP). The sequence is that of Orotidine 5'-phosphate decarboxylase from Acinetobacter baylyi (strain ATCC 33305 / BD413 / ADP1).